The sequence spans 322 residues: Prephenate dehydratase (322 aa).

Residues 5–191 form the Prephenate dehydratase domain; that stretch reads RIAYLGPEGT…ARTRFVLVGM (187 aa). The region spanning 205–282 is the ACT domain; it reads SAVLRIDNAP…ADVCYLGSWP (78 aa). The interval 286–322 is disordered; the sequence is ATGPTVSPPPPDEASRWLARLRAGKPDQASEPGGGKL.

As to quaternary structure, homodimer.

It carries out the reaction prephenate + H(+) = 3-phenylpyruvate + CO2 + H2O. Its pathway is amino-acid biosynthesis; L-phenylalanine biosynthesis; phenylpyruvate from prephenate: step 1/1. The chain is Prephenate dehydratase (pheA) from Mycobacterium leprae (strain Br4923).